The sequence spans 472 residues: UDP-N-acetylmuramate--L-alanine ligase (472 aa).

Position 123–129 (123–129 (GSHGKTT)) interacts with ATP.

This sequence belongs to the MurCDEF family.

It localises to the cytoplasm. The enzyme catalyses UDP-N-acetyl-alpha-D-muramate + L-alanine + ATP = UDP-N-acetyl-alpha-D-muramoyl-L-alanine + ADP + phosphate + H(+). It participates in cell wall biogenesis; peptidoglycan biosynthesis. In terms of biological role, cell wall formation. The sequence is that of UDP-N-acetylmuramate--L-alanine ligase from Solibacter usitatus (strain Ellin6076).